A 246-amino-acid chain; its full sequence is MRRIKCTIAYDGTNFAGYQIQQQKRTVQGELERALSIIHKGQFVRVYASGRTDATVHAYGQVIHFDTPLTIPDERWPKALNALLPDDVIVKEASEVPSSFHARFSVKKKEYRYRVWIGEKNVFLRHYVYHHPYDVSVPAMNEALRYLIGTHDFTSFCSAKTEVDDKVRTIYEAEVVQEGEELIFRLVGNGFLYNMVRIIVGTVLEVGRGERCAEEIKTILEQKNRSVAGKTAPGHGLYLWHVSYDN.

The Nucleophile role is filled by aspartate 53. Position 111 (tyrosine 111) interacts with substrate.

It belongs to the tRNA pseudouridine synthase TruA family. In terms of assembly, homodimer.

The enzyme catalyses uridine(38/39/40) in tRNA = pseudouridine(38/39/40) in tRNA. In terms of biological role, formation of pseudouridine at positions 38, 39 and 40 in the anticodon stem and loop of transfer RNAs. The polypeptide is tRNA pseudouridine synthase A (Anoxybacillus flavithermus (strain DSM 21510 / WK1)).